Reading from the N-terminus, the 111-residue chain is Histone H2A-Bbd type 1 (111 aa).

The protein belongs to the histone H2A family. As to quaternary structure, the nucleosome is a histone octamer containing two molecules each of H2A, H2B, H3 and H4 assembled in one H3-H4 heterotetramer and two H2A-H2B heterodimers. Incorporated into nucleosomes during late spermatogenesis. Interacts with H2BC1/TH2B; preferentially dimerizes with H2BC1/TH2B to form nucleosomes. Highly expressed in adult testis, mainly in spermatocytes.

The protein resides in the nucleus. It is found in the chromosome. In terms of biological role, atypical histone H2A which replaces conventional H2A during late spermatogenesis and is involved in the replacement of histones to protamine in male germ cells. Core component of nucleosome: nucleosomes wrap and compact DNA into chromatin, limiting DNA accessibility to the cellular machineries which require DNA as a template. Nucleosomes containing H2AB1 only wrap 130 bp of DNA, compared to 147 bp for classical nucleosomes. In condensing spermatids, the heterodimer between H2AB1 and H2BC1/TH2B is loaded onto the nucleosomes and promotes loading of transition proteins (TNP1 and TNP2) onto the nucleosomes. Inclusion of the H2AB1-H2BC1/TH2B dimer into chromatin opens the nucleosomes, releasing the nucleosomal DNA ends and allowing the invasion of nucleosomes by transition proteins (TNP1 and TNP2). Then, transition proteins drive the recruitment and processing of protamines, which are responsible for histone eviction. In Mus musculus (Mouse), this protein is Histone H2A-Bbd type 1 (H2ab1).